Reading from the N-terminus, the 806-residue chain is Leucine--tRNA ligase (806 aa).

A 'HIGH' region motif is present at residues 54 to 64; sequence SYPSGDLHMGH. A 'KMSKS' region motif is present at residues 571-575; the sequence is KMSKS. ATP is bound at residue Lys-574.

Belongs to the class-I aminoacyl-tRNA synthetase family.

The protein resides in the cytoplasm. The enzyme catalyses tRNA(Leu) + L-leucine + ATP = L-leucyl-tRNA(Leu) + AMP + diphosphate. The sequence is that of Leucine--tRNA ligase from Tropheryma whipplei (strain TW08/27) (Whipple's bacillus).